A 184-amino-acid polypeptide reads, in one-letter code: Peptide deformylase 2 (184 aa).

Positions 110 and 153 each coordinate Fe cation. The active site involves glutamate 154. Histidine 157 is a binding site for Fe cation.

This sequence belongs to the polypeptide deformylase family. The cofactor is Fe(2+).

The catalysed reaction is N-terminal N-formyl-L-methionyl-[peptide] + H2O = N-terminal L-methionyl-[peptide] + formate. In terms of biological role, removes the formyl group from the N-terminal Met of newly synthesized proteins. Requires at least a dipeptide for an efficient rate of reaction. N-terminal L-methionine is a prerequisite for activity but the enzyme has broad specificity at other positions. This Bacillus subtilis (strain 168) protein is Peptide deformylase 2 (defB).